Here is a 178-residue protein sequence, read N- to C-terminus: Large ribosomal subunit protein uL6 (178 aa).

It belongs to the universal ribosomal protein uL6 family. In terms of assembly, part of the 50S ribosomal subunit.

Functionally, this protein binds to the 23S rRNA, and is important in its secondary structure. It is located near the subunit interface in the base of the L7/L12 stalk, and near the tRNA binding site of the peptidyltransferase center. The protein is Large ribosomal subunit protein uL6 of Exiguobacterium sibiricum (strain DSM 17290 / CCUG 55495 / CIP 109462 / JCM 13490 / 255-15).